We begin with the raw amino-acid sequence, 91 residues long: MKTYVLQALLLTLAVAVVRAANTGIEWPPKPQKCAEGETWKECVGSSCAELTCEHPEPSLGCTYDCNYGCYCAPDFFRNANKECVKKDKCP.

An N-terminal signal peptide occupies residues 1–20 (MKTYVLQALLLTLAVAVVRA). Cystine bridges form between cysteine 34–cysteine 70, cysteine 43–cysteine 66, cysteine 48–cysteine 62, cysteine 53–cysteine 90, and cysteine 72–cysteine 84. Residues 34–90 (CAEGETWKECVGSSCAELTCEHPEPSLGCTYDCNYGCYCAPDFFRNANKECVKKDKC) enclose the TIL domain.

It belongs to the serine protease inhibitor-like (TIL domain-containing) family. As to expression, salivary gland. Midgut.

The protein resides in the secreted. Functionally, tight-binding competitive inhibitor of chymotrypsin-like proteases; inhibits host chymase, cathepsin G (CTSG) and chymotrypsin. Inhibits chymase-mediated generation of vasoconstrictor peptides: angiotensin II and endothelin I. Reduces chymase-mediated vascular permeability and vascular endothelial-cadherin degradation. The protein is Ixochymostatin of Ixodes scapularis (Black-legged tick).